The chain runs to 445 residues: MAAQVPTEALKELNVAEGSQKPGATAQSKTDAAGDEHGGDDSEDEADGHVDGAAPTGEATKKKKKRKPKKKKKHPTSQTDPPRVMISQLFPNKAYPKGEEVEYKDENNYRTTNEEKRHLDNLNSDFLADFREAAEIHRQVRQWTQKTVKPGQTLTEIAEGIENSVRALTGHDGLTEGDAMKAGMGFPCGLSLNHCAAHYTPNAGNKMVLQQEDVMKVDFGVHVNGRIVDSAFTMAFEPKYDNLLQAVKDATNAGIREAGIDARVGEIGGVIQEVMESFEVEIDGTTYPVKSIRNLTGHNILPYSIHGTKAVPIVKSNDQTKMEEGDVFAIETFGSTGNGYVRDDMETSHYAKRGDSQHVDLRLSSAKNLLNVINKNFGTLPFCRRYLDRLGSDKYLLGLNSLVNSGIVEAYPPLCDKKGSYTAQFEHTILIRPTVKEVVSRGDDY.

Positions methionine 1–glutamate 99 are disordered. Residues lysine 61–proline 75 show a composition bias toward basic residues. Histidine 198 lines the substrate pocket. Positions 218, 229, and 298 each coordinate a divalent metal cation. Residue histidine 306 coordinates substrate. Residues glutamate 331 and glutamate 426 each coordinate a divalent metal cation.

It belongs to the peptidase M24A family. Methionine aminopeptidase eukaryotic type 2 subfamily. Co(2+) serves as cofactor. It depends on Zn(2+) as a cofactor. Mn(2+) is required as a cofactor. The cofactor is Fe(2+).

The protein localises to the cytoplasm. The catalysed reaction is Release of N-terminal amino acids, preferentially methionine, from peptides and arylamides.. Functionally, cotranslationally removes the N-terminal methionine from nascent proteins. The N-terminal methionine is often cleaved when the second residue in the primary sequence is small and uncharged (Met-Ala-, Cys, Gly, Pro, Ser, Thr, or Val). The chain is Methionine aminopeptidase 2-1 from Fusarium vanettenii (strain ATCC MYA-4622 / CBS 123669 / FGSC 9596 / NRRL 45880 / 77-13-4) (Fusarium solani subsp. pisi).